The chain runs to 40 residues: Photosystem II reaction center protein J (40 aa).

The chain crosses the membrane as a helical span at residues 8-28; the sequence is IPLWIIGTVTGLLVIGLIGIF.

Belongs to the PsbJ family. As to quaternary structure, PSII is composed of 1 copy each of membrane proteins PsbA, PsbB, PsbC, PsbD, PsbE, PsbF, PsbH, PsbI, PsbJ, PsbK, PsbL, PsbM, PsbT, PsbX, PsbY, PsbZ, Psb30/Ycf12, at least 3 peripheral proteins of the oxygen-evolving complex and a large number of cofactors. It forms dimeric complexes.

It localises to the plastid. It is found in the chloroplast thylakoid membrane. Its function is as follows. One of the components of the core complex of photosystem II (PSII). PSII is a light-driven water:plastoquinone oxidoreductase that uses light energy to abstract electrons from H(2)O, generating O(2) and a proton gradient subsequently used for ATP formation. It consists of a core antenna complex that captures photons, and an electron transfer chain that converts photonic excitation into a charge separation. The chain is Photosystem II reaction center protein J from Ipomoea purpurea (Common morning glory).